The chain runs to 394 residues: 5-azacytidine-induced protein 2 (394 aa).

The interval 1 to 197 (MDALVEDDIC…IELRKAKQTD (197 aa)) is homodimerization. Coiled coils occupy residues 40–76 (ALVT…LIAR) and 102–196 (DRDN…AKQT). Residues 216-257 (SDNMQHAYWELKREMSNLHLVTQVQAELLRKLKTSTAIKKAC) are interaction with TBK1 and IKBKE. 2 positions are modified to phosphoserine: Ser318 and Ser355. The disordered stretch occupies residues 355–379 (SPPKSSETAFGETKSKTLPLPNLPP).

As to quaternary structure, homodimer. Interacts with IKBKE, TBK1 and TICAM1. Interacts with TAX1BP1. Interacts with CALCOCO2. Post-translationally, ubiquitinated via 'Lys-48'-linked polyubiquitination by TRIM38, leading to its degradation.

The protein resides in the cytoplasm. In terms of biological role, adapter protein which binds TBK1 and IKBKE playing a role in antiviral innate immunity. Activates serine/threonine-protein kinase TBK1 and facilitates its oligomerization. Enhances the phosphorylation of NF-kappa-B p65 subunit RELA by TBK1. Promotes TBK1-induced as well as TNF-alpha or PMA-induced activation of NF-kappa-B. Participates in IFNB promoter activation via TICAM1. This is 5-azacytidine-induced protein 2 (AZI2) from Macaca fascicularis (Crab-eating macaque).